The following is a 168-amino-acid chain: Phosphopantetheine adenylyltransferase (168 aa).

Thr11 is a binding site for substrate. ATP-binding positions include 11 to 12 (TF) and His19. Substrate-binding residues include Lys43, Thr75, and Arg89. ATP contacts are provided by residues 90-92 (GIR), Glu100, and 125-131 (WSYMSSS).

Belongs to the bacterial CoaD family. As to quaternary structure, homohexamer. Mg(2+) is required as a cofactor.

It is found in the cytoplasm. It catalyses the reaction (R)-4'-phosphopantetheine + ATP + H(+) = 3'-dephospho-CoA + diphosphate. The protein operates within cofactor biosynthesis; coenzyme A biosynthesis; CoA from (R)-pantothenate: step 4/5. In terms of biological role, reversibly transfers an adenylyl group from ATP to 4'-phosphopantetheine, yielding dephospho-CoA (dPCoA) and pyrophosphate. This is Phosphopantetheine adenylyltransferase from Wigglesworthia glossinidia brevipalpis.